Here is a 329-residue protein sequence, read N- to C-terminus: DNA-directed RNA polymerase subunit alpha (329 aa).

Residues 1–234 (MQGSVTEFLK…EQLDAFVELR (234 aa)) are alpha N-terminal domain (alpha-NTD). Residues 248–329 (FDPILLRPVD…WPPASLIDND (82 aa)) form an alpha C-terminal domain (alpha-CTD) region.

Belongs to the RNA polymerase alpha chain family. As to quaternary structure, homodimer. The RNAP catalytic core consists of 2 alpha, 1 beta, 1 beta' and 1 omega subunit. When a sigma factor is associated with the core the holoenzyme is formed, which can initiate transcription.

The enzyme catalyses RNA(n) + a ribonucleoside 5'-triphosphate = RNA(n+1) + diphosphate. In terms of biological role, DNA-dependent RNA polymerase catalyzes the transcription of DNA into RNA using the four ribonucleoside triphosphates as substrates. The sequence is that of DNA-directed RNA polymerase subunit alpha from Idiomarina loihiensis (strain ATCC BAA-735 / DSM 15497 / L2-TR).